The sequence spans 227 residues: Floral homeotic protein DEFICIENS (227 aa).

Residues 3 to 57 form the MADS-box domain; that stretch reads RGKIQIKRIENQTNRQVTYSKRRNGLFKKAHELSVLCDAKVSIIMISSTQKLHEY. The K-box domain occupies 84 to 174; it reads YEKMQEHLKK…VLEFDARRED (91 aa).

It is found in the nucleus. Functionally, transcription factor involved in the genetic control of flower development. Acts in conjunction with GLOBOSA (glo). This Antirrhinum majus (Garden snapdragon) protein is Floral homeotic protein DEFICIENS (DEFA).